The sequence spans 234 residues: Urease accessory protein UreF (234 aa).

It belongs to the UreF family. UreD, UreF and UreG form a complex that acts as a GTP-hydrolysis-dependent molecular chaperone, activating the urease apoprotein by helping to assemble the nickel containing metallocenter of UreC. The UreE protein probably delivers the nickel.

Its subcellular location is the cytoplasm. Its function is as follows. Required for maturation of urease via the functional incorporation of the urease nickel metallocenter. This Azoarcus sp. (strain BH72) protein is Urease accessory protein UreF.